The primary structure comprises 233 residues: Small ribosomal subunit protein uS3 (233 aa).

A KH type-2 domain is found at 39 to 107; sequence IRTFLKRKLY…EVNINIKEER (69 aa). Positions 211–233 are disordered; it reads GVQPEKTEESAPAKKPRRARRGK. Positions 213–222 are enriched in basic and acidic residues; it reads QPEKTEESAP. A compositionally biased stretch (basic residues) spans 224–233; the sequence is KKPRRARRGK.

Belongs to the universal ribosomal protein uS3 family. In terms of assembly, part of the 30S ribosomal subunit. Forms a tight complex with proteins S10 and S14.

Its function is as follows. Binds the lower part of the 30S subunit head. Binds mRNA in the 70S ribosome, positioning it for translation. The chain is Small ribosomal subunit protein uS3 from Campylobacter lari (strain RM2100 / D67 / ATCC BAA-1060).